The sequence spans 1072 residues: Carbamoyl phosphate synthase large chain (1072 aa).

The carboxyphosphate synthetic domain stretch occupies residues 1–401; it reads MPKRLDINTI…SLLKAVRSLE (401 aa). The ATP site is built by Arg-129, Arg-169, Gly-175, Gly-176, Lys-208, Ile-210, Glu-215, Gly-241, Val-242, His-243, Gln-284, and Glu-298. The 195-residue stretch at 133–327 folds into the ATP-grasp 1 domain; that stretch reads RTLMQELNEP…IAKLAAKIAV (195 aa). Residues Gln-284, Glu-298, and Asn-300 each contribute to the Mg(2+) site. Mn(2+) is bound by residues Gln-284, Glu-298, and Asn-300. Positions 402 to 546 are oligomerization domain; that stretch reads LGIYHLELDH…YSTYADENES (145 aa). The tract at residues 547–929 is carbamoyl phosphate synthetic domain; the sequence is IVTDRKSVVV…ALYKGLVASG (383 aa). In terms of domain architecture, ATP-grasp 2 spans 671–861; sequence EAALTKLGIP…MANVATKVIL (191 aa). Arg-707, Arg-746, Glu-752, Gly-777, Val-778, His-779, Ser-780, Gln-820, and Glu-832 together coordinate ATP. Gln-820, Glu-832, and Asn-834 together coordinate Mg(2+). 3 residues coordinate Mn(2+): Gln-820, Glu-832, and Asn-834. The 143-residue stretch at 930–1072 folds into the MGS-like domain; sequence INIPTHGSVI…QTKRHEVVHA (143 aa). Positions 930 to 1072 are allosteric domain; sequence INIPTHGSVI…QTKRHEVVHA (143 aa).

It belongs to the CarB family. Composed of two chains; the small (or glutamine) chain promotes the hydrolysis of glutamine to ammonia, which is used by the large (or ammonia) chain to synthesize carbamoyl phosphate. Tetramer of heterodimers (alpha,beta)4. The cofactor is Mg(2+). It depends on Mn(2+) as a cofactor.

The catalysed reaction is hydrogencarbonate + L-glutamine + 2 ATP + H2O = carbamoyl phosphate + L-glutamate + 2 ADP + phosphate + 2 H(+). The enzyme catalyses hydrogencarbonate + NH4(+) + 2 ATP = carbamoyl phosphate + 2 ADP + phosphate + 2 H(+). It functions in the pathway amino-acid biosynthesis; L-arginine biosynthesis; carbamoyl phosphate from bicarbonate: step 1/1. Its pathway is pyrimidine metabolism; UMP biosynthesis via de novo pathway; (S)-dihydroorotate from bicarbonate: step 1/3. In terms of biological role, large subunit of the glutamine-dependent carbamoyl phosphate synthetase (CPSase). CPSase catalyzes the formation of carbamoyl phosphate from the ammonia moiety of glutamine, carbonate, and phosphate donated by ATP, constituting the first step of 2 biosynthetic pathways, one leading to arginine and/or urea and the other to pyrimidine nucleotides. The large subunit (synthetase) binds the substrates ammonia (free or transferred from glutamine from the small subunit), hydrogencarbonate and ATP and carries out an ATP-coupled ligase reaction, activating hydrogencarbonate by forming carboxy phosphate which reacts with ammonia to form carbamoyl phosphate. The chain is Carbamoyl phosphate synthase large chain from Bacillus cereus (strain AH820).